The following is a 204-amino-acid chain: MELSIATPQGAKGTVSVSEAAFGREFNQDLVHQAVVAFMAGARQGTKAQKNRAAVSGGGKKPWRQKGTGRARAGTIRSPLWRSGGVTFAAEPRDHSQKLNKKMYRAAIRCILSELARQERLVVVEEFDLDAPKTKDLVQKLAQFDLADVLIIGEDVSENLYLAARNLHKVDVRDVNGLDPVSLIRFDKVVVTVAALKKLEEVLV.

The disordered stretch occupies residues 49–72 (QKNRAAVSGGGKKPWRQKGTGRAR).

This sequence belongs to the universal ribosomal protein uL4 family. As to quaternary structure, part of the 50S ribosomal subunit.

In terms of biological role, one of the primary rRNA binding proteins, this protein initially binds near the 5'-end of the 23S rRNA. It is important during the early stages of 50S assembly. It makes multiple contacts with different domains of the 23S rRNA in the assembled 50S subunit and ribosome. Its function is as follows. Forms part of the polypeptide exit tunnel. The protein is Large ribosomal subunit protein uL4 of Saccharophagus degradans (strain 2-40 / ATCC 43961 / DSM 17024).